We begin with the raw amino-acid sequence, 856 residues long: MGRKLDLSGLTDDETEHVLQVVQRDFNLRKKEEDRLSEMKQRLAEENSKCSILSKHQKFVERCCMRCCSPFTFLVNARRRCGECKFSVCKSCCSYQKHEKLWVCCVCQQARLLRTQSLEWFYNNVKSRFKRFGSAKVLKNLYRKHRLESGACFDILGGGLFEPNLENEGSISGSDSTFYRQSEGHSMMDTLAVALRVAEEAIEEAISKAESHGDSLDKQNEASYLRDHKQELTEELAGTILQRIIRKQKDKAELRAEEEEPEWPRSQSGSVKARGEGTTAPPGRHKARATFRRSQSAFSFTMEDALKSGSAEAAPRSPKDRAQRLLEEAALPSWRSMDGLDGTNLAPLLQSPDGNWMTLKDGSRQPPTRLLTKPKSGTFQALEVASSVTSAYDEIGSDSEEDFDYSEALSKLCPPSQSRLKQPQPQPTQAQSSGQGPLATSPSNPEAMCSDSETSSTSSSREAGCRAKLSWLQRKAPKNPAVEKMPLQGELDVNFNPQAAGGETSDSSDPEETLRTAERRARRWRRARVGPEESNRGLPSPGAHPRALHTAQVSDNVSETDISNETQNSRSSTDSVEEKLRNRLYELAMKMSEKETSSGEDQESESKAEPKNQKGSLSSEENNQGVQEELKKKCSAVSLCNISTEVLKVINATEELIAESAGPWEIPPVSTDRENGMFPLGTDQVRLDKQLTSLEENVYLAAGTVYGLEGQLSELEDAARCIHSSTGETELADLEDQVAAAAAQVHHAELQISDIESRISALTIAGLNIAPCVRLTRRRDQKQRSQVQTIDTSRQQRRKLPAPPVKAEKIEASSVTPIKTFNRNFLLQGSSTNRPTASTGDTKDLMEPDLESAVMY.

One can recognise a RabBD domain in the interval 4-124 (KLDLSGLTDD…TQSLEWFYNN (121 aa)). Residues 63 to 105 (CCMRCCSPFTFLVNARRRCGECKFSVCKSCCSYQKHEKLWVCC) form an FYVE-type zinc finger. A myosin-binding region spans residues 143–560 (RKHRLESGAC…AQVSDNVSET (418 aa)). Positions 193–209 (VALRVAEEAIEEAISKA) are PRKAR2A-binding. The negative regulation of PRKAR2A-binding stretch occupies residues 232–248 (LTEELAGTILQRIIRKQ). A disordered region spans residues 252–294 (AELRAEEEEPEWPRSQSGSVKARGEGTTAPPGRHKARATFRRS). A phosphoserine mark is found at serine 299 and serine 351. Disordered regions lie at residues 351–578 (SPDG…SVEE), 592–625 (SEKETSSGEDQESESKAEPKNQKGSLSSEENNQG), 778–806 (RRDQKQRSQVQTIDTSRQQRRKLPAPPVK), and 826–856 (LLQGSSTNRPTASTGDTKDLMEPDLESAVMY). Residues 395–405 (IGSDSEEDFDY) are compositionally biased toward acidic residues. Composition is skewed to low complexity over residues 427 to 437 (PTQAQSSGQGP) and 450 to 460 (SDSETSSTSSS). Positions 495–856 (FNPQAAGGET…EPDLESAVMY (362 aa)) are actin-binding. Polar residues-rich tracts occupy residues 551–574 (AQVSDNVSETDISNETQNSRSSTD), 613–625 (QKGSLSSEENNQG), 784–793 (RSQVQTIDTS), and 826–840 (LLQGSSTNRPTASTG).

In terms of assembly, binds RAB27A that has been activated by GTP-binding via its N-terminus. Binds MYO5A, MYO7A and F-actin. Interacts with PRKAR2A. Interacts with components of the exocyst complex, including EXOC3 and EXOC4. As to expression, detected in brain, skin, heart, lung, adrenal medulla, pancreas, intestine, liver, kidney, skeletal muscle and testis. Detected in cochlear and vestibular hair cells in the inner ear, and in photoreceptor and pigment epithelium cells in the retina.

It is found in the cytoplasm. The protein localises to the perinuclear region. Its subcellular location is the cytoplasmic vesicle. It localises to the secretory vesicle. The protein resides in the melanosome. Its function is as follows. Rab effector protein involved in melanosome transport. Serves as link between melanosome-bound RAB27A and the motor proteins MYO5A and MYO7A. May link RAB27A-containing vesicles to actin filaments. Functions as a protein kinase A-anchoring protein (AKAP). May act as a scaffolding protein that links PKA to components of the exocytosis machinery, thus facilitating exocytosis, including insulin release. This chain is Rab effector MyRIP (Myrip), found in Mus musculus (Mouse).